The following is a 197-amino-acid chain: Probable 26S proteasome non-ATPase regulatory subunit 9 (197 aa).

The PDZ domain occupies 75-166; it reads KIVVEMENEN…KIIRVTVIRE (92 aa).

It belongs to the proteasome subunit p27 family.

Functionally, acts as a chaperone during the assembly of the 26S proteasome, specifically of the base subcomplex of the 19S regulatory complex (RC). In Caenorhabditis elegans, this protein is Probable 26S proteasome non-ATPase regulatory subunit 9 (psmd-9).